A 113-amino-acid polypeptide reads, in one-letter code: Na(+)/H(+) antiporter subunit C1 (113 aa).

Helical transmembrane passes span 1-21, 28-48, and 72-92; these read MEIIMIFVCGILASISVYLVL, IVMGTTLITHASNLFLITMGG, and LILTAIVIAFATTAFFLVLAF.

Belongs to the CPA3 antiporters (TC 2.A.63) subunit C family. In terms of assembly, may form a heterooligomeric complex that consists of seven subunits: mnhA1, mnhB1, mnhC1, mnhD1, mnhE1, mnhF1 and mnhG1.

The protein resides in the cell membrane. Mnh complex is a Na(+)/H(+) antiporter involved in Na(+) excretion. This Staphylococcus haemolyticus (strain JCSC1435) protein is Na(+)/H(+) antiporter subunit C1 (mnhC1).